We begin with the raw amino-acid sequence, 218 residues long: Histone H1 (218 aa).

Over residues Met-1–Ala-19 the composition is skewed to low complexity. Disordered stretches follow at residues Met-1–Thr-42 and Val-89–Lys-218. Ser-2 bears the N-acetylserine mark. The H15 domain occupies Ala-37–Lys-110. Basic residues-rich tracts occupy residues Lys-118–Ala-133, Lys-141–Lys-158, Lys-166–Ala-184, and Lys-191–Lys-218.

It belongs to the histone H1/H5 family.

The protein localises to the nucleus. The protein resides in the chromosome. Histones H1 are necessary for the condensation of nucleosome chains into higher-order structures. This is Histone H1 from Gallus gallus (Chicken).